The sequence spans 497 residues: Guanosine-5'-triphosphate,3'-diphosphate pyrophosphatase (497 aa).

This sequence belongs to the GppA/Ppx family. GppA subfamily.

It carries out the reaction guanosine 3'-diphosphate 5'-triphosphate + H2O = guanosine 3',5'-bis(diphosphate) + phosphate + H(+). Its pathway is purine metabolism; ppGpp biosynthesis; ppGpp from GTP: step 2/2. In terms of biological role, catalyzes the conversion of pppGpp to ppGpp. Guanosine pentaphosphate (pppGpp) is a cytoplasmic signaling molecule which together with ppGpp controls the 'stringent response', an adaptive process that allows bacteria to respond to amino acid starvation, resulting in the coordinated regulation of numerous cellular activities. The protein is Guanosine-5'-triphosphate,3'-diphosphate pyrophosphatase of Vibrio vulnificus (strain YJ016).